Here is a 134-residue protein sequence, read N- to C-terminus: Viral interleukin-8 homolog (134 aa).

An N-terminal signal peptide occupies residues 1–22; that stretch reads MQALLLVLVLFIVQIYLLPGNG.

The protein belongs to the intercrine alpha (chemokine CxC) family. In terms of assembly, homodimer.

The protein resides in the secreted. In terms of biological role, plays a role in the early phase of cytolytic infections presumably by recruiting host B or T-lymphocytes. The protein is Viral interleukin-8 homolog (MDV078) of Gallus gallus (Chicken).